Consider the following 720-residue polypeptide: Catalase-peroxidase (720 aa).

The segment at residues 82–207 (WHSAGTYRTF…LGNTVMGLIY (126 aa)) is a cross-link (tryptophyl-tyrosyl-methioninium (Trp-Tyr) (with M-233)). The active-site Proton acceptor is the histidine 83. A cross-link (tryptophyl-tyrosyl-methioninium (Tyr-Met) (with W-82)) is located at residues 207–233 (YVNPEGPNGEPDLEGSAKNIRESFGKM). Residue histidine 248 participates in heme b binding.

Belongs to the peroxidase family. Peroxidase/catalase subfamily. In terms of assembly, homodimer or homotetramer. Requires heme b as cofactor. Formation of the three residue Trp-Tyr-Met cross-link is important for the catalase, but not the peroxidase activity of the enzyme.

It catalyses the reaction H2O2 + AH2 = A + 2 H2O. The catalysed reaction is 2 H2O2 = O2 + 2 H2O. Its function is as follows. Bifunctional enzyme with both catalase and broad-spectrum peroxidase activity. In Halobacterium salinarum (strain ATCC 29341 / DSM 671 / R1), this protein is Catalase-peroxidase.